Here is a 312-residue protein sequence, read N- to C-terminus: MTIQDHTKRKIPRLSATRDCHEIWPTVQEHGAVIIKNLLPLEVVQRLNREVDPYVKIEPIPAAETKDHPNRVLSTTTRMINVLADFSKAYREDVLNNETLNKVSTDAFSVYGDYWVLMGAVMELAPTNPAQPLHRDMRFSHPLVDYLKHDAPPTSINLLIALTPFTVENGATHVILGSHKWPDLSGATMEQTVRAVMEPGDAVLITDNTVHCGGADMTGTETRRLLSLTMGISQITPLESNFTVPRPIIESLTPLAQRLVGWRSQRSSVPRDIGLLTIRGKSIENTLGLKSEQPLPDGMEKGSMQETDIGGQ.

Fe cation contacts are provided by histidine 134, aspartate 136, and histidine 211. A disordered region spans residues 287–312 (LGLKSEQPLPDGMEKGSMQETDIGGQ).

The protein belongs to the PhyH family. As to quaternary structure, homodimer. Requires Fe cation as cofactor.

The enzyme catalyses (-)-cyclopeptine + 2-oxoglutarate + O2 = (Z)-dehydrocyclopeptine + succinate + CO2 + H2O. It catalyses the reaction (Z)-dehydrocyclopeptine + 2-oxoglutarate + O2 = (-)-cyclopenine + succinate + CO2. The catalysed reaction is (-)-4'-methoxycyclopeptine + 2-oxoglutarate + O2 = (Z)-4'-methoxydehydrocyclopeptine + succinate + CO2 + H2O. It carries out the reaction (Z)-4'-methoxydehydrocyclopeptine + 2-oxoglutarate + O2 = (-)-4'-methoxycyclopenine + succinate + CO2. Its pathway is secondary metabolite biosynthesis. The protein operates within alkaloid biosynthesis. It participates in mycotoxin biosynthesis. In terms of biological role, iron/alpha-ketoglutarate-dependent dioxygenase; part of the gene cluster that mediates the biosynthesis of penigequinolones, potent insecticidal alkaloids that contain a highly modified 10-carbon prenyl group. The first stage is catalyzed by the nonribosomal peptide synthetase penN that condenses anthranilic acid and O-methyl-L-tyrosine to produce 4'-methoxycyclopeptin. 4'-methoxycyclopeptin is then converted to 4'-methoxydehydrocyclopeptin by the ketoglutarate-dependent dioxygenase penM through dehydrogenation to form a double bond between C-alpha and C-beta of the O-methyltyrosine side chain. PenM also converts its first product methoxydehydrocyclopeptin to 4'-methoxycyclopenin. The following conversion of 4'methoxycyclopenin into 4'-methoxyviridicatin is catalyzed by the cyclopenase penL. 4'-methoxyviridicatin is the precursor of quinolone natural products, and is further converted to quinolinone B. The prenyltransferase penI then catalyzes the canonical Friedel-Crafts alkylation of quinolinone B with dimethylallyl cation to yield dimethylallyl quinolone, which is subjected to FAD-dependent dehydrogenation by the FAD-linked oxidoreductase penH to yield conjugated aryl diene. The delta(3') double bond then serves as the site of the second alkylation with DMAPP catalyzed by the prenyltransferase penG to yield a carbenium ion intermediate, which can be attacked by H(2)O to yield a styrenyl quinolone containing a C3'-hydroxyprenyl chain, or undergo cyclization to yield yaequinolones J1 and J2. The conversion of the styrenyl quinolone into the tetrahydrofuran-containing yaequinolone C is performed by the FAD-dependent monooxygenase penE and involves epoxidation of the terminal C7'-C8' olefin, followed by epoxide ring opening initiated by the C3' hydroxyl group. The predicted cysteine hydrolase penJ acts as an epoxide hydrolase that enhances the rate of the 5-exo-tet cyclization step, increasing the yield of yaequinolone C. PenF catalyzes the cationic rearrangement of the epoxide formed by penE (before ring opening to produce yaequinolone C) into yaequinolone D. Finally, the short-chain dehydrogenase/reductase (SDR)-like reductase penD, catalyzes both the dehydration of yaequinolone D and the reduction of the resulting oxonium to yield penigequinolone. The sequence is that of Iron/alpha-ketoglutarate-dependent dioxygenase penM from Penicillium thymicola.